Consider the following 532-residue polypeptide: Probable NAD kinase 1 (532 aa).

Basic and acidic residues predominate over residues 1 to 26 (MSLDELPHKVSDERVNHDTVTSHESE). The interval 1–32 (MSLDELPHKVSDERVNHDTVTSHESEIGSGSI) is disordered.

It belongs to the NAD kinase family.

The enzyme catalyses NAD(+) + ATP = ADP + NADP(+) + H(+). This Oryza sativa subsp. japonica (Rice) protein is Probable NAD kinase 1.